The chain runs to 90 residues: Small ribosomal subunit protein bS20 (90 aa).

It belongs to the bacterial ribosomal protein bS20 family.

Its function is as follows. Binds directly to 16S ribosomal RNA. The chain is Small ribosomal subunit protein bS20 from Mesomycoplasma hyopneumoniae (strain 232) (Mycoplasma hyopneumoniae).